The sequence spans 119 residues: Protein TusC (119 aa).

This sequence belongs to the DsrF/TusC family. Heterohexamer, formed by a dimer of trimers. The hexameric TusBCD complex contains 2 copies each of TusB, TusC and TusD. The TusBCD complex interacts with TusE.

The protein resides in the cytoplasm. In terms of biological role, part of a sulfur-relay system required for 2-thiolation of 5-methylaminomethyl-2-thiouridine (mnm(5)s(2)U) at tRNA wobble positions. The polypeptide is Protein TusC (Citrobacter koseri (strain ATCC BAA-895 / CDC 4225-83 / SGSC4696)).